Consider the following 123-residue polypeptide: Large ribosomal subunit protein uL18 (123 aa).

The protein belongs to the universal ribosomal protein uL18 family. Part of the 50S ribosomal subunit; part of the 5S rRNA/L5/L18/L25 subcomplex. Contacts the 5S and 23S rRNAs.

This is one of the proteins that bind and probably mediate the attachment of the 5S RNA into the large ribosomal subunit, where it forms part of the central protuberance. This is Large ribosomal subunit protein uL18 from Chlamydia caviae (strain ATCC VR-813 / DSM 19441 / 03DC25 / GPIC) (Chlamydophila caviae).